Here is a 147-residue protein sequence, read N- to C-terminus: Large ribosomal subunit protein bL9 (147 aa).

It belongs to the bacterial ribosomal protein bL9 family.

Functionally, binds to the 23S rRNA. This is Large ribosomal subunit protein bL9 from Clostridium botulinum (strain ATCC 19397 / Type A).